A 477-amino-acid polypeptide reads, in one-letter code: Histidine--tRNA ligase (477 aa).

The protein belongs to the class-II aminoacyl-tRNA synthetase family. As to quaternary structure, homodimer.

It is found in the cytoplasm. It catalyses the reaction tRNA(His) + L-histidine + ATP = L-histidyl-tRNA(His) + AMP + diphosphate + H(+). The sequence is that of Histidine--tRNA ligase from Xanthomonas campestris pv. campestris (strain 8004).